We begin with the raw amino-acid sequence, 383 residues long: Outer membrane protein Omp-EA (383 aa).

Residues 1–21 (MKRNILAVLIPALLAAGAANA) form the signal peptide. Topologically, residues 22 to 30 (AEIYNKDGN) are periplasmic. The chain crosses the membrane as a beta stranded span at residues 31–45 (KLDLYGKVKAMRYLS). Topologically, residues 46-58 (DADSNASNNADKS) are extracellular. A beta stranded transmembrane segment spans residues 59–70 (YTRIGFKGQTLI). At 71 to 74 (NDQL) the chain is on the periplasmic side. A beta stranded transmembrane segment spans residues 75–86 (TGYGQWEYNFSL). Residues 87–100 (SNSESSSDAQSGNK) lie on the Extracellular side of the membrane. Residues 101 to 109 (TRLGFAGLK) traverse the membrane as a beta stranded segment. Residues 110–112 (LKD) are Periplasmic-facing. Residues 113–122 (YGSVDYGRNY) traverse the membrane as a beta stranded segment. The Extracellular portion of the chain corresponds to 123 to 155 (GVIYDVEAFTDMMPEFGATGYTRTDTYMLTRGN). A beta stranded membrane pass occupies residues 156-164 (SMLTWRNSD). Topologically, residues 165-171 (FFGLVDG) are periplasmic. A beta stranded membrane pass occupies residues 172-178 (LKIALQY). At 179 to 198 (QGKNEGSGTRATNVSNGDGY) the chain is on the extracellular side. A beta stranded membrane pass occupies residues 199–206 (GASLSYKI). At 207-209 (VEG) the chain is on the periplasmic side. A beta stranded membrane pass occupies residues 210–219 (LTINGAMSSS). Over 220-243 (NRLNANSASSTTSQKMAAYGSGGR) the chain is Extracellular. Residues 244 to 252 (AEAWATGLK) traverse the membrane as a beta stranded segment. Residues 253-258 (YDANGV) lie on the Periplasmic side of the membrane. The beta stranded transmembrane segment at 259 to 268 (YLAGTYAETR) threads the bilayer. Topologically, residues 269 to 296 (NTNPFSGASYTFAGNSTATAVSGYANKV) are extracellular. Residues 297–307 (QNTELVAQYQF) form a beta stranded membrane-spanning segment. Over 308-310 (DSG) the chain is Periplasmic. The beta stranded transmembrane segment at 311 to 319 (LRPSLAYVQ) threads the bilayer. Residues 320–335 (TKAKDIENGIGDADLS) lie on the Extracellular side of the membrane. The chain crosses the membrane as a beta stranded span at residues 336–346 (KFVDVAATYYF). Residues 347–351 (NKNMS) are Periplasmic-facing. A beta stranded membrane pass occupies residues 352–361 (AFVDYKVNLL). The Extracellular portion of the chain corresponds to 362 to 372 (SDSNKLHLNTD). The chain crosses the membrane as a beta stranded span at residues 373-383 (DIVAVGLVYQF).

The protein belongs to the Gram-negative porin family. In terms of assembly, homotrimer.

The protein localises to the cell outer membrane. May play an important role in maintaining pathogenicity in plants. In Erwinia amylovora (Fire blight bacteria), this protein is Outer membrane protein Omp-EA (omp-EA).